The following is a 186-amino-acid chain: MAQSSSPISGVAERYAGSLFELALQANSVAKVESDLNSFEAMLAGSSDLTRLINSPVFSGEEQAKAIAAIADKAGITGLTGNFLRVVARNRRLFAVPGMIKAFRQIAAEHRGETAAEVTSAHELTAAQQTELKAALKSVAGKDVAISVTVDPSLLGGLVVKIGSRQIDTSLKTKLNSLKLALKEVG.

This sequence belongs to the ATPase delta chain family. In terms of assembly, F-type ATPases have 2 components, F(1) - the catalytic core - and F(0) - the membrane proton channel. F(1) has five subunits: alpha(3), beta(3), gamma(1), delta(1), epsilon(1). F(0) has three main subunits: a(1), b(2) and c(10-14). The alpha and beta chains form an alternating ring which encloses part of the gamma chain. F(1) is attached to F(0) by a central stalk formed by the gamma and epsilon chains, while a peripheral stalk is formed by the delta and b chains.

Its subcellular location is the cell inner membrane. Functionally, f(1)F(0) ATP synthase produces ATP from ADP in the presence of a proton or sodium gradient. F-type ATPases consist of two structural domains, F(1) containing the extramembraneous catalytic core and F(0) containing the membrane proton channel, linked together by a central stalk and a peripheral stalk. During catalysis, ATP synthesis in the catalytic domain of F(1) is coupled via a rotary mechanism of the central stalk subunits to proton translocation. Its function is as follows. This protein is part of the stalk that links CF(0) to CF(1). It either transmits conformational changes from CF(0) to CF(1) or is implicated in proton conduction. In Mesorhizobium japonicum (strain LMG 29417 / CECT 9101 / MAFF 303099) (Mesorhizobium loti (strain MAFF 303099)), this protein is ATP synthase subunit delta.